Consider the following 295-residue polypeptide: Septu protein PtuB (295 aa).

Component of antiviral defense system Septu type II, composed of PtuA and PtuB. Expression of Septu type II in B.subtilis (strain BEST7003) confers resistance to phages SBSphiC and SpBeta. May be a nuclease. The sequence is that of Septu protein PtuB from Bacillus mycoides (strain KBAB4) (Bacillus weihenstephanensis).